Consider the following 302-residue polypeptide: Aspartate carbamoyltransferase catalytic subunit (302 aa).

Positions 55 and 56 each coordinate carbamoyl phosphate. K83 contacts L-aspartate. R105, H133, and Q136 together coordinate carbamoyl phosphate. L-aspartate is bound by residues R166 and R222. Residues G262 and P263 each coordinate carbamoyl phosphate.

The protein belongs to the aspartate/ornithine carbamoyltransferase superfamily. ATCase family. In terms of assembly, heterododecamer (2C3:3R2) of six catalytic PyrB chains organized as two trimers (C3), and six regulatory PyrI chains organized as three dimers (R2).

It catalyses the reaction carbamoyl phosphate + L-aspartate = N-carbamoyl-L-aspartate + phosphate + H(+). Its pathway is pyrimidine metabolism; UMP biosynthesis via de novo pathway; (S)-dihydroorotate from bicarbonate: step 2/3. Functionally, catalyzes the condensation of carbamoyl phosphate and aspartate to form carbamoyl aspartate and inorganic phosphate, the committed step in the de novo pyrimidine nucleotide biosynthesis pathway. This is Aspartate carbamoyltransferase catalytic subunit from Solibacter usitatus (strain Ellin6076).